A 259-amino-acid chain; its full sequence is Peroxisomal membrane protein 11B (259 aa).

Position 43 is an N6-acetyllysine (Lys43). The tract at residues 157-176 is disordered; sequence LKGSGGGVPGGSETGGLGGP. Residues 159–176 are compositionally biased toward gly residues; it reads GSGGGVPGGSETGGLGGP. The tract at residues 211 to 259 is interaction with PEX19, PEX11G and FIS1 and peroxisome targeting; that stretch reads VVRNACDLFIPLDKLGLWRCGPGIVGLCGLVSSILSILTLIYPWLRLKP. Residues 233–255 traverse the membrane as a helical segment; sequence GIVGLCGLVSSILSILTLIYPWL.

It belongs to the peroxin-11 family. In terms of assembly, homodimer. Heterodimer with PEX11G. Interacts with PEX19. Interacts with FIS1.

It localises to the peroxisome membrane. In terms of biological role, involved in peroxisomal proliferation. May regulate peroxisome division by recruiting the dynamin-related GTPase DNM1L to the peroxisomal membrane. Promotes membrane protrusion and elongation on the peroxisomal surface. In Homo sapiens (Human), this protein is Peroxisomal membrane protein 11B (PEX11B).